Here is a 210-residue protein sequence, read N- to C-terminus: Putative polysaccharide-binding protein (210 aa).

Positions 1 to 22 are cleaved as a signal peptide; that stretch reads MGFLKGTAAALTLLSAAAAASA. CBM1 domains lie at 23-62, 63-105, 125-165, and 166-210; these read CGVLYEQCGGIGFDGVTCCSEGLMCMKMGPYYSQCRAMPG, MMGQ…LANK, CGKE…APPP, and KMGE…PMHP.

The polypeptide is Putative polysaccharide-binding protein (Porphyra purpurea (Red seaweed)).